Consider the following 226-residue polypeptide: 2-dehydro-3-deoxy-phosphogluconate aldolase (226 aa).

Catalysis depends on Glu57, which acts as the Proton acceptor. Arg61, Thr85, and Lys145 together coordinate pyruvate. Lys145 (schiff-base intermediate with substrate) is an active-site residue.

The protein belongs to the KHG/KDPG aldolase family. As to quaternary structure, homotrimer.

It carries out the reaction 2-dehydro-3-deoxy-6-phospho-D-gluconate = D-glyceraldehyde 3-phosphate + pyruvate. It functions in the pathway carbohydrate acid metabolism; 2-dehydro-3-deoxy-D-gluconate degradation; D-glyceraldehyde 3-phosphate and pyruvate from 2-dehydro-3-deoxy-D-gluconate: step 2/2. In terms of biological role, involved in the degradation of glucose via the Entner-Doudoroff pathway. Catalyzes the reversible, stereospecific retro-aldol cleavage of 2-keto-3-deoxy-6-phosphogluconate (KDPG) to pyruvate and D-glyceraldehyde-3-phosphate. The polypeptide is 2-dehydro-3-deoxy-phosphogluconate aldolase (Pseudomonas putida (Arthrobacter siderocapsulatus)).